The sequence spans 385 residues: MKRITILGSSGSIGKQTLNIISKMKENVCIEGLAVGSNIKILKSQIKKFKPASVSVNSPAEAQNLKKWCISNNIKTDVYKGNTGLEKLTTMPKTDMILAAIIGAVGLKSIIAAIKAKKDIAIANKEAIVMAGSYIMKLAAENGVSVLPVDSEHSAIFQCCTDEKKSQIKRIILTASGGPFYKYDKDFSKITVEQALDHPTWKMGRKITVDSATLMNKGLEAIEASVLFGVSIDKVEIIIHPQSVVHSMVEYVDGSVIAQLSNPDMKLPIQYALTYPERLPSNIKPLNLIEINKLEFYNPDFNKFPCLSLAYYAAQKGYTVPAVMNAANEMAVASFLNKEIKFTDIAKIVGRTIKTHKISKSTSLDTFIEADYWARHYAEKLINEI.

Residues Ser10, Gly11, Ser12, Ile13, Gly36, Asn38, and Asn124 each contribute to the NADPH site. 1-deoxy-D-xylulose 5-phosphate is bound at residue Lys125. NADPH is bound at residue Glu126. Asp150 provides a ligand contact to Mn(2+). Residues Ser151, Glu152, Ser176, and His198 each contribute to the 1-deoxy-D-xylulose 5-phosphate site. Glu152 serves as a coordination point for Mn(2+). Gly204 contributes to the NADPH binding site. Ser211, Asn216, Lys217, and Glu220 together coordinate 1-deoxy-D-xylulose 5-phosphate. Glu220 lines the Mn(2+) pocket.

Belongs to the DXR family. Requires Mg(2+) as cofactor. Mn(2+) is required as a cofactor.

The enzyme catalyses 2-C-methyl-D-erythritol 4-phosphate + NADP(+) = 1-deoxy-D-xylulose 5-phosphate + NADPH + H(+). It participates in isoprenoid biosynthesis; isopentenyl diphosphate biosynthesis via DXP pathway; isopentenyl diphosphate from 1-deoxy-D-xylulose 5-phosphate: step 1/6. Catalyzes the NADPH-dependent rearrangement and reduction of 1-deoxy-D-xylulose-5-phosphate (DXP) to 2-C-methyl-D-erythritol 4-phosphate (MEP). The chain is 1-deoxy-D-xylulose 5-phosphate reductoisomerase from Endomicrobium trichonymphae.